The chain runs to 280 residues: 2-dehydro-3-deoxyphosphooctonate aldolase 2 (280 aa).

It belongs to the KdsA family.

The protein resides in the cytoplasm. It carries out the reaction D-arabinose 5-phosphate + phosphoenolpyruvate + H2O = 3-deoxy-alpha-D-manno-2-octulosonate-8-phosphate + phosphate. It participates in carbohydrate biosynthesis; 3-deoxy-D-manno-octulosonate biosynthesis; 3-deoxy-D-manno-octulosonate from D-ribulose 5-phosphate: step 2/3. Its pathway is bacterial outer membrane biogenesis; lipopolysaccharide biosynthesis. The sequence is that of 2-dehydro-3-deoxyphosphooctonate aldolase 2 (kdsA2) from Pseudomonas putida (strain ATCC 47054 / DSM 6125 / CFBP 8728 / NCIMB 11950 / KT2440).